Here is a 375-residue protein sequence, read N- to C-terminus: Succinyl-diaminopimelate desuccinylase (375 aa).

A Zn(2+)-binding site is contributed by H75. The active site involves D77. Position 106 (D106) interacts with Zn(2+). Catalysis depends on E136, which acts as the Proton acceptor. Zn(2+) is bound by residues E137, E165, and H348.

The protein belongs to the peptidase M20A family. DapE subfamily. Homodimer. Zn(2+) serves as cofactor. Co(2+) is required as a cofactor.

The enzyme catalyses N-succinyl-(2S,6S)-2,6-diaminopimelate + H2O = (2S,6S)-2,6-diaminopimelate + succinate. It participates in amino-acid biosynthesis; L-lysine biosynthesis via DAP pathway; LL-2,6-diaminopimelate from (S)-tetrahydrodipicolinate (succinylase route): step 3/3. In terms of biological role, catalyzes the hydrolysis of N-succinyl-L,L-diaminopimelic acid (SDAP), forming succinate and LL-2,6-diaminopimelate (DAP), an intermediate involved in the bacterial biosynthesis of lysine and meso-diaminopimelic acid, an essential component of bacterial cell walls. The sequence is that of Succinyl-diaminopimelate desuccinylase from Novosphingobium aromaticivorans (strain ATCC 700278 / DSM 12444 / CCUG 56034 / CIP 105152 / NBRC 16084 / F199).